The sequence spans 158 residues: Protein EOLA2 (158 aa).

An ASCH domain is found at 6-92 (LSFRQPYAGF…IAGLVDIGET (87 aa)).

The protein belongs to the EOLA family.

In Homo sapiens (Human), this protein is Protein EOLA2.